We begin with the raw amino-acid sequence, 231 residues long: GDSL lipase Rv0518 (231 aa).

Residues 1–20 (MSRPGTYVIGLTLLVGLVVG) form the signal peptide. Ser46 serves as the catalytic Nucleophile. Asp205 (proton donor) is an active-site residue. His208 acts as the Proton acceptor in catalysis.

The protein belongs to the 'GDSL' lipolytic enzyme family.

The protein localises to the secreted. It is found in the cell wall. It localises to the extracellular space. The enzyme catalyses a fatty acid ester + H2O = an aliphatic alcohol + a fatty acid + H(+). It carries out the reaction decanoate ester + H2O = decanoate + an aliphatic alcohol + H(+). It catalyses the reaction an octanoate ester + H2O = an aliphatic alcohol + octanoate + H(+). The catalysed reaction is a dodecanoate ester + H2O = an aliphatic alcohol + dodecanoate + H(+). The enzyme catalyses a tetradecanoate ester + H2O = an aliphatic alcohol + tetradecanoate + H(+). Activity is inhibited by the serine modifier phenylmethylsulfonyl fluoride (PMSF). GDSL lipase that catalyzes the hydrolysis of p-nitrophenyl (pNP) esters. pNP-decanoate (C10) is the preferred substrate. It can also use pNP-octanoate (C8), pNP-dodecanoate (C12) and pNP-tetradecanoate (C14). Has lower activity with pNP-butyrate (C4), pNP-palmitate (C16) and pNP-stearate (C18). Does not show phospholipase A1 activity. Might help bacteria to utilize available lipids for its growth as well as provide resistance to various intracellular stresses by cell wall modulation resulting in enhanced intracellular survival. The sequence is that of GDSL lipase Rv0518 from Mycobacterium tuberculosis (strain ATCC 25618 / H37Rv).